Reading from the N-terminus, the 505-residue chain is RNA-splicing ligase RtcB homolog (505 aa).

Residues D119, C122, H227, and H259 each coordinate Mn(2+). Residue 226–230 participates in GMP binding; that stretch reads NHYAE. S300 is modified (phosphoserine). Mn(2+) is bound at residue H353. GMP is bound by residues 353 to 354, 402 to 405, S409, and 428 to 431; these read HN, GGTM, and HGAG. H428 (GMP-histidine intermediate) is an active-site residue. K496 is covalently cross-linked (Glycyl lysine isopeptide (Lys-Gly) (interchain with G-Cter in SUMO2)). Residue K504 coordinates GMP.

Belongs to the RtcB family. Catalytic component of the tRNA-splicing ligase complex. Mn(2+) is required as a cofactor.

It localises to the nucleus. The protein resides in the cytoplasm. It carries out the reaction a 3'-end 3'-phospho-ribonucleotide-RNA + a 5'-end dephospho-ribonucleoside-RNA + GTP = a ribonucleotidyl-ribonucleotide-RNA + GMP + diphosphate. It catalyses the reaction a 3'-end 2',3'-cyclophospho-ribonucleotide-RNA + a 5'-end dephospho-ribonucleoside-RNA + GTP + H2O = a ribonucleotidyl-ribonucleotide-RNA + GMP + diphosphate + H(+). In terms of biological role, catalytic subunit of the tRNA-splicing ligase complex that acts by directly joining spliced tRNA halves to mature-sized tRNAs by incorporating the precursor-derived splice junction phosphate into the mature tRNA as a canonical 3',5'-phosphodiester. May act as an RNA ligase with broad substrate specificity, and may function toward other RNAs. This chain is RNA-splicing ligase RtcB homolog, found in Bos taurus (Bovine).